Here is a 663-residue protein sequence, read N- to C-terminus: Polyunsaturated fatty acid lipoxygenase ALOX15 (663 aa).

One can recognise a PLAT domain in the interval 2-115; the sequence is GVYRIRVSTG…ILNLPEGTGC (114 aa). The 548-residue stretch at 116-663 folds into the Lipoxygenase domain; it reads TVVEDSQGLF…PSLVENSVAI (548 aa). Positions 361, 366, 541, 545, and 663 each coordinate Fe cation.

This sequence belongs to the lipoxygenase family. Interacts with PEBP1; in response to IL13/interleukin-13, prevents the interaction of PEBP1 with RAF1 to activate the ERK signaling cascade. The cofactor is Fe cation. As to expression, found in pituitary and pineal glands as well as leukocytes, kidney, aorta, small intestine and cornea. Also expressed by resident peritoneal macrophages (at protein level).

It is found in the cytoplasm. Its subcellular location is the cytosol. It localises to the cell membrane. The protein localises to the lipid droplet. It carries out the reaction (5Z,8Z,11Z,14Z)-eicosatetraenoate + O2 = (12S)-hydroperoxy-(5Z,8Z,10E,14Z)-eicosatetraenoate. The enzyme catalyses (5Z,8Z,11Z,14Z)-eicosatetraenoate + O2 = (15S)-hydroperoxy-(5Z,8Z,11Z,13E)-eicosatetraenoate. It catalyses the reaction (9Z,12Z)-octadecadienoate + O2 = (13S)-hydroperoxy-(9Z,11E)-octadecadienoate. The catalysed reaction is (5Z,8Z,11Z,14Z)-eicosatetraenoate + 2 O2 = (14R,15S)-dihydroperoxy-(5Z,8Z,10E,12E)-eicosatetraenoate. It carries out the reaction (5Z,8Z,11Z,14Z)-eicosatetraenoate + 2 O2 = (8S,15S)-dihydroperoxy-(5Z,9E,11Z,13E)-eicosatetraenoate. The enzyme catalyses (14S,15R)-epoxy-(5Z,8Z,11Z)-eicosatrienoate + O2 = (8S)-hydroperoxy-(14S,15R)-epoxy-(5Z,9E,11Z)-eicosatrienoate. It catalyses the reaction (14S,15R)-epoxy-(5Z,8Z,11Z)-eicosatrienoate + O2 = (12S)-hydroperoxy-(14S,15R)-epoxy-(5Z,8Z,10E)-eicosatrienoate. The catalysed reaction is (14R,15S)-epoxy-(5Z,8Z,11Z)-eicosatrienoate + O2 = (5S)-hydroperoxy-(14R,15S)-epoxy-(6E,8Z,11Z)-eicosatrienoate. It carries out the reaction (14R,15S)-epoxy-(5Z,8Z,11Z)-eicosatrienoate + O2 = (12S)-hydroperoxy-(14R,15S)-epoxy-(5Z,8Z,10E)-eicosatrienoate. The enzyme catalyses (15R)-hydroperoxy-(5Z,8Z,11Z,13E)-eicosatetraenoate = 15-oxo-(5Z,8Z,11Z,13E)-eicosatetraenoate + H2O. It catalyses the reaction (15S)-hydroperoxy-(5Z,8Z,11Z,13E)-eicosatetraenoate = (14S,15S)-epoxy-(5Z,8Z,10E,12E)-eicosatetraenoate + H2O. The catalysed reaction is (12S)-hydroperoxy-(5Z,8Z,10E,14Z)-eicosatetraenoate = (8S)-hydroxy-(11S,12S)-epoxy-(5Z,9E,14Z)-eicosatrienoate. It carries out the reaction (4Z,7Z,10Z,13Z,16Z)-docosapentaenoate + O2 = 14-hydroperoxy-(4Z,7Z,10Z,12E,16Z)-docosapentaenoate. The enzyme catalyses (7Z,10Z,13Z,16Z,19Z)-docosapentaenoate + O2 = 14-hydroperoxy-(7Z,10Z,12E,16Z,19Z)-docosapentaenoate. It catalyses the reaction (4Z,7Z,10Z,13Z,16Z,19Z)-docosahexaenoate + O2 = (14S)-hydroperoxy-(4Z,7Z,10Z,12E,16Z,19Z)-docosahexaenoate. The catalysed reaction is (4Z,7Z,10Z,13Z,16Z,19Z)-docosahexaenoate + O2 = (17S)-hydroperoxy-(4Z,7Z,10Z,13Z,15E,19Z)-docosahexaenoate. It carries out the reaction (7S)-hydroperoxy-(4Z,8E,10Z,13Z,16Z,19Z)-docosahexaenoate + O2 = (7S,14S)-dihydroperoxy-(4Z,8E,10Z,12E,16Z,19Z)-docosahexaenoate. The enzyme catalyses (7S)-hydroperoxy-(4Z,8E,10Z,13Z,16Z,19Z)-docosahexaenoate + O2 = (7S,17S)-dihydroperoxy-(4Z,8E,10Z,13Z,15E,19Z)-docosahexaenoate. It catalyses the reaction (4Z,7Z,10Z,13Z,16Z,19Z)-docosahexaenoate + O2 = (11S)-hydroperoxy-(4Z,7Z,9E,13Z,16Z,19Z)-docosahexaenoate. The catalysed reaction is N-(5Z,8Z,11Z,14Z)-eicosatetraenoyl-taurine + O2 = N-(12S)-hydroperoxy-(5Z,8Z,10E,14Z)-eicosatetraenoyl-taurine. It carries out the reaction N-(5Z,8Z,11Z,14Z)-eicosatetraenoyl-gamma-aminobutanoate + O2 = N-(12S)-hydroperoxy-(5Z,8Z,10E,14Z)-eicosatetraenoyl-gamma-aminobutanoate. The enzyme catalyses N-(5Z,8Z,11Z,14Z)-eicosatetraenoyl-glycine + O2 = N-(12S)-hydroperoxy-(5Z,8Z,10E,14Z)-eicosatetraenoyl-glycine. It catalyses the reaction N-(5Z,8Z,11Z,14Z)-eicosatetraenoyl-L-alanine + O2 = N-(12S)-hydroperoxy-(5Z,8Z,10E,14Z)-eicosatetraenoyl-alanine. The catalysed reaction is N-(5Z,8Z,11Z,14Z)-eicosatetraenoyl-taurine + O2 = N-(15S)-hydroperoxy-(5Z,8Z,11Z,13E)-eicosatetraenoyl-taurine. It carries out the reaction N-(5Z,8Z,11Z,14Z)-eicosatetraenoyl-gamma-aminobutanoate + O2 = N-(15S)-hydroperoxy-(5Z,8Z,11Z,13E)-eicosatetraenoyl-gamma-aminobutanoate. The enzyme catalyses N-(5Z,8Z,11Z,14Z)-eicosatetraenoyl-glycine + O2 = N-(15S)-hydroperoxy-(5Z,8Z,11Z,13E)-eicosatetraenoyl-glycine. It catalyses the reaction N-(5Z,8Z,11Z,14Z)-eicosatetraenoyl-L-alanine + O2 = N-(15S)-hydroperoxy-(5Z,8Z,11Z,13E)-eicosatetraenoyl-alanine. Its pathway is lipid metabolism; hydroperoxy eicosatetraenoic acid biosynthesis. In terms of biological role, non-heme iron-containing dioxygenase that catalyzes the stereo-specific peroxidation of free and esterified polyunsaturated fatty acids generating a spectrum of bioactive lipid mediators. It inserts peroxyl groups at C12 or C15 of arachidonate ((5Z,8Z,11Z,14Z)-eicosatetraenoate) producing both 12-hydroperoxyeicosatetraenoate/12-HPETE and 15-hydroperoxyeicosatetraenoate/15-HPETE. It may then act on 12-HPETE to produce hepoxilins, which may show pro-inflammatory properties. Can also peroxidize linoleate ((9Z,12Z)-octadecadienoate) to 13-hydroperoxyoctadecadienoate. May participate in the sequential oxidations of DHA ((4Z,7Z,10Z,13Z,16Z,19Z)-docosahexaenoate) to generate specialized pro-resolving mediators (SPMs)like resolvin D5 ((7S,17S)-diHPDHA) and (7S,14S)-diHPDHA, that actively down-regulate the immune response and have anti-aggregation properties with platelets. Can convert epoxy fatty acids to hydroperoxy-epoxides derivatives followed by an intramolecular nucleophilic substitution leading to the formation of monocyclic endoperoxides. Plays an important role during the maintenance of self-tolerance by peroxidizing membrane-bound phosphatidylethanolamine which can then signal the sorting process for clearance of apoptotic cells during inflammation and prevent an autoimmune response. In addition to its role in the immune and inflammatory responses, this enzyme may play a role in epithelial wound healing in the cornea through production of lipoxin A4 (LXA(4)) and docosahexaenoic acid-derived neuroprotectin D1 (NPD1; 10R,17S-HDHA), both lipid autacoids exhibit anti-inflammatory and neuroprotective properties. Furthermore, it may regulate actin polymerization which is crucial for several biological processes such as the phagocytosis of apoptotic cells. It is also implicated in the generation of endogenous ligands for peroxisome proliferator activated receptor (PPAR-gamma), hence modulating macrophage development and function. It may also exert a negative effect on skeletal development by regulating bone mass through this pathway. As well as participates in ER stress and downstream inflammation in adipocytes, pancreatic islets, and liver. Finally, it is also involved in the cellular response to IL13/interleukin-13. This chain is Polyunsaturated fatty acid lipoxygenase ALOX15, found in Mus musculus (Mouse).